A 338-amino-acid chain; its full sequence is MELQAQLKQYKPLNQQQMNEFIELLIADDISNEIKANLLSSFSEKEITQEELTYISKSLIHSMYRQQPYYPNSMCVCGTGGDKSNSFNISTTVSFVIASANIPVIKHGNKSVTSSSGSTDLLEAMGINTSSVEATPSQLNQVGLAFLSATDTYPIMKSIQPIRKMMTNPTIFNITGPIINPFKLDYQVMGVYETSKLEKIAQTLKDLGRKKAIVVYGANGMDEATLSGDNMIYEVNENEATKNYTVNPKDVGLAYAPNEALIGGTPLENLEITKNILTGVDRSAKRDVVVFNAGIALYVAEKVSSIKQGVIEAQRLIDNGNAIAQYNKMGGMTYDYIG.

5-phospho-alpha-D-ribose 1-diphosphate-binding positions include G78, 81–82, S86, 88–91, 106–114, and S118; these read GD, NIST, and KHGNKSVTS. Anthranilate is bound at residue G78. Residue S90 participates in Mg(2+) binding. N109 contacts anthranilate. Anthranilate is bound at residue R163. Mg(2+)-binding residues include D222 and E223.

Belongs to the anthranilate phosphoribosyltransferase family. In terms of assembly, homodimer. Mg(2+) is required as a cofactor.

It carries out the reaction N-(5-phospho-beta-D-ribosyl)anthranilate + diphosphate = 5-phospho-alpha-D-ribose 1-diphosphate + anthranilate. Its pathway is amino-acid biosynthesis; L-tryptophan biosynthesis; L-tryptophan from chorismate: step 2/5. Its function is as follows. Catalyzes the transfer of the phosphoribosyl group of 5-phosphorylribose-1-pyrophosphate (PRPP) to anthranilate to yield N-(5'-phosphoribosyl)-anthranilate (PRA). In Staphylococcus saprophyticus subsp. saprophyticus (strain ATCC 15305 / DSM 20229 / NCIMB 8711 / NCTC 7292 / S-41), this protein is Anthranilate phosphoribosyltransferase.